Consider the following 226-residue polypeptide: Ribonuclease 3 (226 aa).

Residues 6 to 128 form the RNase III domain; sequence IQKLQKILGY…LIGSIFLDSN (123 aa). Mg(2+) is bound at residue E41. Residue D45 is part of the active site. Mg(2+) contacts are provided by N114 and E117. The active site involves E117. The region spanning 155–225 is the DRBM domain; the sequence is DPKTRLQEYL…AQNALIKLGI (71 aa).

Belongs to the ribonuclease III family. Homodimer. The cofactor is Mg(2+).

The protein localises to the cytoplasm. The enzyme catalyses Endonucleolytic cleavage to 5'-phosphomonoester.. Its function is as follows. Digests double-stranded RNA. Involved in the processing of primary rRNA transcript to yield the immediate precursors to the large and small rRNAs (23S and 16S). Processes some mRNAs, and tRNAs when they are encoded in the rRNA operon. Processes pre-crRNA and tracrRNA of type II CRISPR loci if present in the organism. In Buchnera aphidicola subsp. Baizongia pistaciae (strain Bp), this protein is Ribonuclease 3.